The primary structure comprises 489 residues: Probable anthranilate synthase component 1 (489 aa).

Residues Ser54 and 262 to 264 (PYM) contribute to the L-tryptophan site. 297-298 (GT) contributes to the chorismate binding site. A Mg(2+)-binding site is contributed by Glu324. Ser390 and Ser392 each carry phosphoserine. Chorismate is bound by residues Tyr412, Arg433, 447 to 449 (GGG), and Gly449. Glu462 contacts Mg(2+). The residue at position 488 (Ser488) is a Phosphoserine.

Belongs to the anthranilate synthase component I family. As to quaternary structure, tetramer of two components I and two components II. Mg(2+) is required as a cofactor.

It catalyses the reaction chorismate + L-glutamine = anthranilate + pyruvate + L-glutamate + H(+). It functions in the pathway amino-acid biosynthesis; L-tryptophan biosynthesis; L-tryptophan from chorismate: step 1/5. The chain is Probable anthranilate synthase component 1 (trp3) from Schizosaccharomyces pombe (strain 972 / ATCC 24843) (Fission yeast).